We begin with the raw amino-acid sequence, 181 residues long: Inner membrane-spanning protein YciB (181 aa).

A run of 5 helical transmembrane segments spans residues 10–30 (LIIF…GALI), 50–70 (MQLI…ALHD), 80–100 (IVYV…KPAI), 120–140 (WAWV…AYHL), and 148–168 (FKVF…GGYI).

The protein belongs to the YciB family.

Its subcellular location is the cell inner membrane. Functionally, plays a role in cell envelope biogenesis, maintenance of cell envelope integrity and membrane homeostasis. In Vibrio cholerae serotype O1 (strain ATCC 39541 / Classical Ogawa 395 / O395), this protein is Inner membrane-spanning protein YciB.